A 169-amino-acid polypeptide reads, in one-letter code: Peptide deformylase (169 aa).

The Fe cation site is built by cysteine 91 and histidine 133. The active site involves glutamate 134. Histidine 137 serves as a coordination point for Fe cation.

This sequence belongs to the polypeptide deformylase family. It depends on Fe(2+) as a cofactor.

The catalysed reaction is N-terminal N-formyl-L-methionyl-[peptide] + H2O = N-terminal L-methionyl-[peptide] + formate. Removes the formyl group from the N-terminal Met of newly synthesized proteins. Requires at least a dipeptide for an efficient rate of reaction. N-terminal L-methionine is a prerequisite for activity but the enzyme has broad specificity at other positions. The polypeptide is Peptide deformylase (Haemophilus influenzae (strain ATCC 51907 / DSM 11121 / KW20 / Rd)).